Consider the following 325-residue polypeptide: Lipoyl synthase (325 aa).

The tract at residues 1–24 (MPIAPDRVRHPEKANRPDNPIQRK) is disordered. Cysteine 54, cysteine 59, cysteine 65, cysteine 80, cysteine 84, cysteine 87, and serine 293 together coordinate [4Fe-4S] cluster. The region spanning 66–282 (WKKKHATFMI…VTVGRGKGFL (217 aa)) is the Radical SAM core domain.

Belongs to the radical SAM superfamily. Lipoyl synthase family. It depends on [4Fe-4S] cluster as a cofactor.

The protein resides in the cytoplasm. The catalysed reaction is [[Fe-S] cluster scaffold protein carrying a second [4Fe-4S](2+) cluster] + N(6)-octanoyl-L-lysyl-[protein] + 2 oxidized [2Fe-2S]-[ferredoxin] + 2 S-adenosyl-L-methionine + 4 H(+) = [[Fe-S] cluster scaffold protein] + N(6)-[(R)-dihydrolipoyl]-L-lysyl-[protein] + 4 Fe(3+) + 2 hydrogen sulfide + 2 5'-deoxyadenosine + 2 L-methionine + 2 reduced [2Fe-2S]-[ferredoxin]. It functions in the pathway protein modification; protein lipoylation via endogenous pathway; protein N(6)-(lipoyl)lysine from octanoyl-[acyl-carrier-protein]: step 2/2. Its function is as follows. Catalyzes the radical-mediated insertion of two sulfur atoms into the C-6 and C-8 positions of the octanoyl moiety bound to the lipoyl domains of lipoate-dependent enzymes, thereby converting the octanoylated domains into lipoylated derivatives. In Rhodospirillum centenum (strain ATCC 51521 / SW), this protein is Lipoyl synthase.